A 300-amino-acid chain; its full sequence is Transacylase cctO (300 aa).

A helical membrane pass occupies residues 52-72 (IVYVSLTFFVVSIGLNFILAI). 2 short sequence motifs (HXXHC) span residues 185–189 (HQLGC) and 225–229 (HVDQC). N-linked (GlcNAc...) asparagine glycosylation is present at asparagine 270.

The protein belongs to the ustYa family.

It localises to the membrane. Its pathway is mycotoxin biosynthesis. Its function is as follows. Transacylase; part of the gene cluster that mediates the biosynthesis of the mycotoxin cyclochlorotine, a hepatotoxic and carcinogenic cyclic chlorinated pentapeptide. Within the pathway, cctO catalyzes the intramolecular O,N-transacylation from isocyclochlorotine to cyclochlorotine. The NRPS cctN initially catalyzes the condensation of L-serine (Ser), Pro, L-2-aminobutyrate (2Abu), Ser, and beta-Phe in this order to produce isocyclotine. After the dichlorination of Pro2 catalyzed by cctP2 to produce isocyclochlorotine, the cctO-mediated transacylation of isocyclochlorotine can furnish cyclochlorotine. The subsequent hydroxylation of cyclochlorotine by cctR yields hydroxycyclochlorotine as the final product. CctP1 probably acts as a phenylalanine aminomutase and provides the uncommon building block beta-Phe. Furthermore, 2Abu can be synthesized from threonine by one of the threonine dehydratases and transaminases localized outside of the cluster. The functions of the remaining proteins encoded by the cluster, cctM and cctT, have not been identified yet. The sequence is that of Transacylase cctO from Talaromyces islandicus (Penicillium islandicum).